The following is a 193-amino-acid chain: NADH-quinone oxidoreductase subunit B (193 aa).

[4Fe-4S] cluster-binding residues include cysteine 49, cysteine 50, cysteine 115, and cysteine 144. Residues 172-193 (FKKEEPREANAPVPVNTEMPLE) form a disordered region.

Belongs to the complex I 20 kDa subunit family. In terms of assembly, NDH-1 is composed of 14 different subunits. Subunits NuoB, C, D, E, F, and G constitute the peripheral sector of the complex. [4Fe-4S] cluster is required as a cofactor.

The protein localises to the cell inner membrane. The enzyme catalyses a quinone + NADH + 5 H(+)(in) = a quinol + NAD(+) + 4 H(+)(out). In terms of biological role, NDH-1 shuttles electrons from NADH, via FMN and iron-sulfur (Fe-S) centers, to quinones in the respiratory chain. The immediate electron acceptor for the enzyme in this species is believed to be ubiquinone. Couples the redox reaction to proton translocation (for every two electrons transferred, four hydrogen ions are translocated across the cytoplasmic membrane), and thus conserves the redox energy in a proton gradient. The sequence is that of NADH-quinone oxidoreductase subunit B from Akkermansia muciniphila (strain ATCC BAA-835 / DSM 22959 / JCM 33894 / BCRC 81048 / CCUG 64013 / CIP 107961 / Muc).